The primary structure comprises 222 residues: 3-dehydroquinate dehydratase (222 aa).

3-dehydroquinate is bound by residues 29–31 (ELR) and R55. H112 functions as the Proton donor/acceptor in the catalytic mechanism. Residue K139 is the Schiff-base intermediate with substrate of the active site. 3-dehydroquinate-binding residues include R178, S199, and Q203.

The protein belongs to the type-I 3-dehydroquinase family. Homodimer.

It catalyses the reaction 3-dehydroquinate = 3-dehydroshikimate + H2O. Its pathway is metabolic intermediate biosynthesis; chorismate biosynthesis; chorismate from D-erythrose 4-phosphate and phosphoenolpyruvate: step 3/7. Its function is as follows. Involved in the third step of the chorismate pathway, which leads to the biosynthesis of aromatic amino acids. Catalyzes the cis-dehydration of 3-dehydroquinate (DHQ) and introduces the first double bond of the aromatic ring to yield 3-dehydroshikimate. The protein is 3-dehydroquinate dehydratase of Dehalococcoides mccartyi (strain ATCC BAA-2266 / KCTC 15142 / 195) (Dehalococcoides ethenogenes (strain 195)).